The primary structure comprises 435 residues: Probable E3 ubiquitin-protein ligase makorin-1 (435 aa).

2 consecutive C3H1-type zinc fingers follow at residues 18–45 and 48–75; these read WTKHVTCRYFMHGLCKEGDNCRYSHDLT and KPAAMICKFFQKGNCVFGDRCRFEHCKP. The tract at residues 81-109 is disordered; the sequence is LPAPQMLPLPSASLAGPSDPEPSGPTPVP. Residues 99–108 show a composition bias toward pro residues; sequence DPEPSGPTPV. Residues 155 to 182 form a C3H1-type 3 zinc finger; that stretch reads QLRKQLCPYAAVGECRYGINCAYLHGDV. The makorin-type Cys-His stretch occupies residues 183 to 210; that stretch reads CYMCGLQVLHPTDNNQRSEHTKACIEAH. The RING-type zinc-finger motif lies at 228–282; that stretch reads CGVCMEVVFEKANPSERRFGILSNCSHCYCLKCIRKWRSAKQFESKIIKSCPECR. A C3H1-type 4 zinc finger spans residues 311-340; sequence GMGSKPCRYFDEGRGTCPFGSNCFYKHAFP. A disordered region spans residues 345–369; it reads EEAQPQRRQTGSNSRNRNSRRTPLW.

As to expression, weakly expressed in adult brain, heart and kidney.

It catalyses the reaction S-ubiquitinyl-[E2 ubiquitin-conjugating enzyme]-L-cysteine + [acceptor protein]-L-lysine = [E2 ubiquitin-conjugating enzyme]-L-cysteine + N(6)-ubiquitinyl-[acceptor protein]-L-lysine.. The protein operates within protein modification; protein ubiquitination. Functionally, E3 ubiquitin ligase catalyzing the covalent attachment of ubiquitin moieties onto substrate proteins. The polypeptide is Probable E3 ubiquitin-protein ligase makorin-1 (Seriola quinqueradiata (Five-ray yellowtail)).